A 128-amino-acid chain; its full sequence is Transcription antitermination protein NusB (128 aa).

This sequence belongs to the NusB family.

Its function is as follows. Involved in transcription antitermination. Required for transcription of ribosomal RNA (rRNA) genes. Binds specifically to the boxA antiterminator sequence of the ribosomal RNA (rrn) operons. The sequence is that of Transcription antitermination protein NusB from Listeria monocytogenes serotype 4b (strain CLIP80459).